A 567-amino-acid chain; its full sequence is Urease subunit alpha (567 aa).

In terms of domain architecture, Urease spans 129–567; that stretch reads GGVDTHIHFI…LPMAQRYFLF (439 aa). 3 residues coordinate Ni(2+): His134, His136, and Lys217. Lys217 is subject to N6-carboxylysine. His219 contributes to the substrate binding site. Positions 246 and 272 each coordinate Ni(2+). The Proton donor role is filled by His320. Asp360 provides a ligand contact to Ni(2+).

This sequence belongs to the metallo-dependent hydrolases superfamily. Urease alpha subunit family. Heterotrimer of UreA (gamma), UreB (beta) and UreC (alpha) subunits. Three heterotrimers associate to form the active enzyme. Ni cation is required as a cofactor. In terms of processing, carboxylation allows a single lysine to coordinate two nickel ions.

The protein resides in the cytoplasm. The catalysed reaction is urea + 2 H2O + H(+) = hydrogencarbonate + 2 NH4(+). The protein operates within nitrogen metabolism; urea degradation; CO(2) and NH(3) from urea (urease route): step 1/1. This Aliivibrio fischeri (strain MJ11) (Vibrio fischeri) protein is Urease subunit alpha.